A 473-amino-acid chain; its full sequence is 3-isopropylmalate dehydratase large subunit (473 aa).

Positions 351, 414, and 417 each coordinate [4Fe-4S] cluster.

Belongs to the aconitase/IPM isomerase family. LeuC type 1 subfamily. As to quaternary structure, heterodimer of LeuC and LeuD. [4Fe-4S] cluster is required as a cofactor.

It carries out the reaction (2R,3S)-3-isopropylmalate = (2S)-2-isopropylmalate. Its pathway is amino-acid biosynthesis; L-leucine biosynthesis; L-leucine from 3-methyl-2-oxobutanoate: step 2/4. Catalyzes the isomerization between 2-isopropylmalate and 3-isopropylmalate, via the formation of 2-isopropylmaleate. This Acidovorax ebreus (strain TPSY) (Diaphorobacter sp. (strain TPSY)) protein is 3-isopropylmalate dehydratase large subunit.